A 104-amino-acid polypeptide reads, in one-letter code: Zinc finger C2H2 protein ECU02_0310 (104 aa).

The C2H2-type zinc finger occupies 56–80; it reads FYCCECDRHFITEKVLMEHKRSNPH.

This sequence belongs to the ZNF593/BUD20 C2H2-type zinc-finger protein family. Associates with pre-60S ribosomal particles; released from the pre-60S particle very early in the cytoplasm.

The protein resides in the nucleus. Its subcellular location is the cytoplasm. In terms of biological role, involved in pre-60S ribosomal particles maturation by promoting the nuclear export of the 60S ribosome. This Encephalitozoon cuniculi (strain GB-M1) (Microsporidian parasite) protein is Zinc finger C2H2 protein ECU02_0310.